The sequence spans 307 residues: Mitochondrial brown fat uncoupling protein 1 (307 aa).

Residues 1 to 10 (MVSQTTSEVQ) are Mitochondrial intermembrane-facing. A helical transmembrane segment spans residues 11-32 (PTMGVKIFSAGVAACLADIITF). Solcar repeat units lie at residues 11 to 102 (PTMG…VQEY), 111 to 201 (PTLV…MKGA), and 210 to 295 (DDVP…LKKE). Over 33-73 (PLDTAKVRLQIQGEGQTSSTIRYKGVLGTITTLAKTEGLPK) the chain is Mitochondrial matrix. K56 contributes to the fatty acid 16:0 binding site. The chain crosses the membrane as a helical span at residues 74 to 96 (LYSGLPAGIQRQISFASLRIGLY). The Mitochondrial intermembrane segment spans residues 97 to 116 (DTVQEYFSSGKETPPTLVNR). A helical membrane pass occupies residues 117–133 (ISAGLMTGGVAVFIGQP). Residues 134-178 (TEVVKVRLQAQSHLHGIKPRYTGTYNAYRIIATTESLSTLWKGTT) lie on the Mitochondrial matrix side of the membrane. Residues 179–195 (PNLLRNVIINCTELVTY) form a helical membrane-spanning segment. Residues 196 to 212 (DLMKGALVNNQILADDV) lie on the Mitochondrial intermembrane side of the membrane. Residues 213-232 (PCHLLSALVAGFCTTFLASP) traverse the membrane as a helical segment. Residues 233–266 (ADVVKTRFINSLPGQYPSVPSCAMTMFTKEGPTA) are Mitochondrial matrix-facing. At C254 the chain carries Cysteine sulfenic acid (-SOH). Residues 267–289 (FFKGFVPSFLRLASWNVIMFVCF) traverse the membrane as a helical segment. K269 is a binding site for fatty acid 16:0. The Mitochondrial intermembrane segment spans residues 290–307 (EQLKKELMKSRQTVDCTT).

Belongs to the mitochondrial carrier (TC 2.A.29) family. In terms of assembly, most probably functions as a monomer. Binds one purine nucleotide per monomer. However, has also been suggested to function as a homodimer or a homotetramer. Tightly associates with cardiolipin in the mitochondrion inner membrane; may stabilize and regulate its activity. In terms of processing, may undergo sulfenylation upon cold exposure. May increase the sensitivity of UCP1 thermogenic function to the activation by noradrenaline probably through structural effects. May undergo ubiquitin-mediated proteasomal degradation. As to expression, brown adipose tissue.

The protein resides in the mitochondrion inner membrane. It catalyses the reaction H(+)(in) = H(+)(out). Has no constitutive proton transporter activity and has to be activated by long-chain fatty acids/LCFAs. Inhibited by purine nucleotides. Both purine nucleotides and LCFAs bind the cytosolic side of the transporter and directly compete to activate or inhibit it. Activated by noradrenaline and reactive oxygen species. Despite lacking canonical translational encoding for selenocysteine, a small pool of the protein has been observed to selectively incorporate selenocysteine at 'Cys-254'. Selenocysteine-modified protein is highly sensitive to redox modification and may constitute a pool of protein highly sensitive to activation by elevated levels of reactive oxygen species (ROS). In terms of biological role, mitochondrial protein responsible for thermogenic respiration, a specialized capacity of brown adipose tissue and beige fat that participates in non-shivering adaptive thermogenesis to temperature and diet variations and more generally to the regulation of energy balance. Functions as a long-chain fatty acid/LCFA and proton symporter, simultaneously transporting one LCFA and one proton through the inner mitochondrial membrane. However, LCFAs remaining associated with the transporter via their hydrophobic tails, it results in an apparent transport of protons activated by LCFAs. Thereby, dissipates the mitochondrial proton gradient and converts the energy of substrate oxydation into heat instead of ATP. Regulates the production of reactive oxygen species/ROS by mitochondria. The sequence is that of Mitochondrial brown fat uncoupling protein 1 from Phodopus sungorus (Striped hairy-footed hamster).